A 373-amino-acid chain; its full sequence is Melanoma-associated antigen C2 (373 aa).

Positions 1 to 102 (MPPVPGVPFR…QGPSQSPLSS (102 aa)) are disordered. Over residues 40–60 (SSASSTLYLVFSPSSFSTSSS) the composition is skewed to low complexity. A compositionally biased stretch (pro residues) spans 85 to 94 (SSPPQGPPQG). The interval 135–373 (SSFTYTLDEK…VMSSNVSFSE (239 aa)) is interaction with TRIM28. The MAGE domain maps to 141-336 (LDEKVAELVE…SSFPSWYKDA (196 aa)).

In terms of assembly, interacts with TRIM28 and UBE2H. As to expression, not expressed in normal tissues, except in germ cells in the seminiferous tubules and in Purkinje cells of the cerebellum. Expressed in various tumors, including melanoma, lymphoma, as well as pancreatic cancer, mammary gland cancer, non-small cell lung cancer and liver cancer. In hepatocellular carcinoma, there is an inverse correlation between tumor differentiation and protein expression, i.e. the lower the differentiation, the higher percentage of expression.

It localises to the cytoplasm. The protein localises to the nucleus. Proposed to enhance ubiquitin ligase activity of RING-type zinc finger-containing E3 ubiquitin-protein ligases. In vitro enhances ubiquitin ligase activity of TRIM28 and stimulates p53/TP53 ubiquitination in presence of Ubl-conjugating enzyme UBE2H leading to p53/TP53 degradation. Proposed to act through recruitment and/or stabilization of the Ubl-conjugating enzymes (E2) at the E3:substrate complex. In Homo sapiens (Human), this protein is Melanoma-associated antigen C2 (MAGEC2).